Consider the following 521-residue polypeptide: Non-specific phospholipase C5 (521 aa).

Positions Ser478–Asp487 are enriched in basic and acidic residues. The tract at residues Ser478–Asn521 is disordered. Over residues Ser511–Asn521 the composition is skewed to polar residues.

The protein belongs to the bacterial phospholipase C family. As to expression, specifically expressed in flowers.

Its subcellular location is the cytoplasm. It is found in the cytosol. It catalyses the reaction a 1,2-diacyl-sn-glycero-3-phosphocholine + H2O = phosphocholine + a 1,2-diacyl-sn-glycerol + H(+). Its function is as follows. Non-specific phospholipase C (PLC) which assumes minor PLC activity during inorganic phosphate starvation. Can hydrolyze both phosphatidylcholine (PC) and phosphatidylethanolamine (PE). Required for normal accumulation of digalactosyldiacylglycerol (DGDG) during phosphate limitation and may contribute to the conversion of phospholipids to diacylglycerol, the substrate for galactolipid synthesis. The protein is Non-specific phospholipase C5 (NPC5) of Arabidopsis thaliana (Mouse-ear cress).